A 505-amino-acid chain; its full sequence is Sodium-coupled neutral amino acid transporter 3 (505 aa).

Residues Val-27–Leu-48 are disordered. Over residues Gln-33–Glu-43 the composition is skewed to basic and acidic residues. Asn-73 carries an N-linked (GlcNAc...) asparagine glycan. The next 5 helical transmembrane spans lie at Gly-82–Leu-102, Val-105–Ile-125, Ala-143–Ile-163, Met-186–Met-206, and Leu-212–Tyr-232. Cys-239 and Cys-276 are disulfide-bonded. 2 N-linked (GlcNAc...) asparagine glycosylation sites follow: Asn-247 and Asn-251. A helical transmembrane segment spans residues Ala-288–Tyr-308. N-linked (GlcNAc...) asparagine glycosylation is present at Asn-324. 5 helical membrane-spanning segments follow: residues Leu-325 to Phe-345, Ile-367 to Phe-387, Val-409 to Ile-429, Ile-432 to Phe-452, and Ala-472 to Ile-492.

This sequence belongs to the amino acid/polyamine transporter 2 family. Expressed predominantly in liver, moderately expressed in kidney and brain, and barely detectable in heart and muscle. Within liver, expressed in hepatocytes. Not detected in testis. Expressed in cells of the ganglion cell layer, in soma of some cells of the inner nuclear layer (at protein level). Expressed in the inner segments of photoreceptor cells.

It is found in the cell membrane. It localises to the basolateral cell membrane. It carries out the reaction L-histidine(out) + Na(+)(out) + H(+)(in) = L-histidine(in) + Na(+)(in) + H(+)(out). The enzyme catalyses L-glutamine(out) + Na(+)(out) + H(+)(in) = L-glutamine(in) + Na(+)(in) + H(+)(out). It catalyses the reaction L-asparagine(out) + Na(+)(out) + H(+)(in) = L-asparagine(in) + Na(+)(in) + H(+)(out). Functionally, symporter that cotransports specific neutral amino acids and sodium ions, coupled to an H(+) antiporter activity. Mainly participates in the glutamate-GABA-glutamine cycle in brain where it transports L-glutamine from astrocytes in the intercellular space for the replenishment of both neurotransmitters glutamate and gamma-aminobutyric acid (GABA) in neurons and also functions as the major influx transporter in ganglion cells mediating the uptake of glutamine. The transport activity is specific for L-glutamine, L-histidine and L-asparagine. The transport is electroneutral coupled to the cotransport of 1 Na(+) and the antiport of 1 H(+). The transport is pH dependent, saturable, Li(+) tolerant and functions in both direction depending on the concentration gradients of its substrates and cotransported ions. Also mediates an amino acid-gated H(+) conductance that is not stoichiometrically coupled to the amino acid transport but which influences the ionic gradients that drive the amino acid transport. In addition, may play a role in nitrogen metabolism, amino acid homeostasis, glucose metabolism and renal ammoniagenesis. In Mus musculus (Mouse), this protein is Sodium-coupled neutral amino acid transporter 3.